A 325-amino-acid chain; its full sequence is Probable transcription factor At4g01260 (325 aa).

Residues 1-98 form a disordered region; it reads MAPKQLKKIE…SMGEEDVKKK (98 aa). Low complexity-rich tracts occupy residues 23–32 and 49–69; these read ASSGESATSG and KPVV…ESST. Residues 73–83 show a composition bias toward basic and acidic residues; that stretch reads RSFEKTDEMSK.

It belongs to the GeBP family.

This is Probable transcription factor At4g01260 from Arabidopsis thaliana (Mouse-ear cress).